We begin with the raw amino-acid sequence, 868 residues long: DNA topoisomerase 1 (868 aa).

A Toprim domain is found at 3 to 147; the sequence is KSLVIVESPA…RYKRVVFNEI (145 aa). Glu9 contributes to the Mg(2+) binding site. The tract at residues 34–70 is disordered; that stretch reads IRDLPTSGSSSSKEPAAKGRKSASEAPALSPKEKARR. Asp116 is a binding site for Mg(2+). One can recognise a Topo IA-type catalytic domain in the interval 163 to 580; that stretch reads DINRVNAQQA…EFYGDFKKKL (418 aa). Residues 197–202 form an interaction with DNA region; that stretch reads SAGRVQ. Tyr324 (O-(5'-phospho-DNA)-tyrosine intermediate) is an active-site residue. C4-type zinc fingers lie at residues 602–633, 664–691, and 713–738; these read CREC…KERC, CPIC…NPDC, and CDKC…NPTC.

The protein belongs to the type IA topoisomerase family. Monomer. The cofactor is Mg(2+).

It catalyses the reaction ATP-independent breakage of single-stranded DNA, followed by passage and rejoining.. Functionally, releases the supercoiling and torsional tension of DNA, which is introduced during the DNA replication and transcription, by transiently cleaving and rejoining one strand of the DNA duplex. Introduces a single-strand break via transesterification at a target site in duplex DNA. The scissile phosphodiester is attacked by the catalytic tyrosine of the enzyme, resulting in the formation of a DNA-(5'-phosphotyrosyl)-enzyme intermediate and the expulsion of a 3'-OH DNA strand. The free DNA strand then undergoes passage around the unbroken strand, thus removing DNA supercoils. Finally, in the religation step, the DNA 3'-OH attacks the covalent intermediate to expel the active-site tyrosine and restore the DNA phosphodiester backbone. This chain is DNA topoisomerase 1, found in Pseudomonas aeruginosa (strain ATCC 15692 / DSM 22644 / CIP 104116 / JCM 14847 / LMG 12228 / 1C / PRS 101 / PAO1).